The sequence spans 351 residues: Dihydroorotate dehydrogenase (quinone) (351 aa).

Residues 61–65 (AGLDK) and T85 each bind FMN. K65 contributes to the substrate binding site. 110 to 114 (NRMGF) serves as a coordination point for substrate. 2 residues coordinate FMN: N139 and N172. Residue N172 participates in substrate binding. Residue S175 is the Nucleophile of the active site. N177 lines the substrate pocket. The FMN site is built by K217 and T245. Residue 246 to 247 (NT) coordinates substrate. Residues G268, G297, and 318 to 319 (YS) contribute to the FMN site.

Belongs to the dihydroorotate dehydrogenase family. Type 2 subfamily. In terms of assembly, monomer. It depends on FMN as a cofactor.

The protein localises to the cell membrane. The catalysed reaction is (S)-dihydroorotate + a quinone = orotate + a quinol. The protein operates within pyrimidine metabolism; UMP biosynthesis via de novo pathway; orotate from (S)-dihydroorotate (quinone route): step 1/1. In terms of biological role, catalyzes the conversion of dihydroorotate to orotate with quinone as electron acceptor. The polypeptide is Dihydroorotate dehydrogenase (quinone) (Stenotrophomonas maltophilia (strain K279a)).